A 340-amino-acid polypeptide reads, in one-letter code: HTH-type transcriptional regulator CelR (340 aa).

One can recognise an HTH lacI-type domain in the interval 1 to 61 (MERRRRPTLE…PNRAARTLVT (61 aa)). A DNA-binding region (H-T-H motif) is located at residues 9–28 (LEMVAALAGVGRGTVSRVIN).

It localises to the cytoplasm. Activity is controlled by cytoplasmic cellobiose levels. Binding of CelR to the celE promoter is inhibited specifically by low concentrations of cellobiose, the major end product of cellulases. Activity may also be regulated through post-translational modification. Functionally, transcriptional regulator that regulates the expression of all six cellulases, encoded by the cel genes (designated celA through celF). Acts as a repressor. Specifically binds to a 14-bp inverted repeat site, which is present in the upstream region of the cellulase genes. In Thermobifida fusca (Thermomonospora fusca), this protein is HTH-type transcriptional regulator CelR.